A 261-amino-acid chain; its full sequence is MGEIKVSPDYNWFRSTVPLKKIIVDDDDSKIWSLYDAGPRSIRCPLIFLPPVSGTADVFFQQILALTGWGYRVIALQYPVYWDHLEFCDGFRKLLDHLQLDKVHLFGASLGGFLAQKFAEYTHKSPRVHSLILCNAFSDTSIFNQTWTANSFWLMPAFMLKKIVLGNFSSGPVDPMMADAIDFMVDRLESLGQSELASRLTLNCQNSYVEPHKIRDIPVTIMDIHLLQFHGTKYAAIDPSVVSAEELDVQKGQLDLSQEEP.

Residues 87–159 (FCDGFRKLLD…NSFWLMPAFM (73 aa)) form the AB hydrolase-1 domain. At S257 the chain carries Phosphoserine.

This sequence belongs to the AB hydrolase superfamily. In terms of assembly, interacts with CD4. Interacts with ALDH16A1.

The protein localises to the cytoplasm. May play a role as a negative regulatory factor in CD4-dependent T-cell activation. The sequence is that of Maspardin (Spg21) from Rattus norvegicus (Rat).